The following is a 132-amino-acid chain: Ribonuclease VapC15 (132 aa).

In terms of domain architecture, PINc spans 1 to 121 (MIVDTSVWIA…HRDRDYEAIR (121 aa)). Asp-96 is a Mg(2+) binding site. Mn(2+) is bound by residues Asp-96, Asp-114, and Asp-116.

Belongs to the PINc/VapC protein family. In terms of assembly, crystallizes as a VapB15-VapC15(2) heterotrimer and as a VapB15(2)-VapC15(2) heterotetramer; each toxin pair forms a homodimer which creates a channel in which the antitoxin binds. Requires Mg(2+) as cofactor. The cofactor is Mn(2+).

RNase activity inhibited by EDTA. Its function is as follows. Toxic component of a type II toxin-antitoxin (TA) system. Degrades total E.coli RNA, which is partially inhibited by cognate antitoxin VapB15. Upon expression in M.smegmatis inhibits colony formation, which is neutralized by coexpression with VapB15. The protein is Ribonuclease VapC15 of Mycobacterium tuberculosis (strain ATCC 25618 / H37Rv).